The primary structure comprises 459 residues: Glycerol-3-phosphate acyltransferase, chloroplastic (459 aa).

The N-terminal 90 residues, 1–90 (MTLTFSSSAA…FNEAAGETPS (90 aa)), are a transit peptide targeting the chloroplast. The HXXXXD motif signature appears at 229-234 (HQSEAD).

It belongs to the GPAT/DAPAT family.

It localises to the plastid. It is found in the chloroplast stroma. The catalysed reaction is sn-glycerol 3-phosphate + an acyl-CoA = a 1-acyl-sn-glycero-3-phosphate + CoA. It functions in the pathway phospholipid metabolism; CDP-diacylglycerol biosynthesis; CDP-diacylglycerol from sn-glycerol 3-phosphate: step 1/3. Its function is as follows. Esterifies acyl-group from acyl-ACP to the sn-1 position of glycerol-3-phosphate. The enzyme from chilling-resistant plants discriminates against non-fluid palmitic acid and selects oleic acid whereas the enzyme from sensitive plants accepts both fatty acids. This is an oleate-selective acyltransferase. The chain is Glycerol-3-phosphate acyltransferase, chloroplastic (ATS1) from Arabidopsis thaliana (Mouse-ear cress).